A 362-amino-acid polypeptide reads, in one-letter code: MKSSMMKKLESLHRRYEEIESMLSDRTVISNQEKFRELSQEYLKLSDINYCFVQWKNCNHDVIETKLLLLDSELHDVAEQELQMLSKKMKKIETEIQVLLLPCDPNDQQNCFLEIRSASGGDEAAIFSGDLFRMYIKYSEFQNWKTNIIHMTHSLKGGYKDIIVKITGKGSYGKLKFESGGHRVQRVPKTESQGRVHTSTCIVAVIPVVPKKEIEKVNINDLKIDTFRSSGAGGQHVNTTDSAVRITHIPSGQVVECQDERSQHKNKAKALSVLVSRIKAAELYNQRKKNAIQRRDLLGTGMRSDRNRTYNFAQNRVTDHRINLVVYCLDEVLDGKLDVLIEPIIQEHNADVLSNLSNIEFL.

An N5-methylglutamine modification is found at glutamine 235.

It belongs to the prokaryotic/mitochondrial release factor family. In terms of processing, methylated by PrmC. Methylation increases the termination efficiency of RF1.

The protein resides in the cytoplasm. In terms of biological role, peptide chain release factor 1 directs the termination of translation in response to the peptide chain termination codons UAG and UAA. The chain is Peptide chain release factor 1 from Buchnera aphidicola subsp. Baizongia pistaciae (strain Bp).